The primary structure comprises 342 residues: tRNA-specific 2-thiouridylase MnmA (342 aa).

Residues 6–13 and L32 contribute to the ATP site; that span reads LLSGGVDS. The Nucleophile role is filled by C92. The cysteines at positions 92 and 191 are disulfide-linked. G116 is a binding site for ATP. Residues 138–140 are interaction with tRNA; sequence KDQ. C191 (cysteine persulfide intermediate) is an active-site residue. The tract at residues 293-294 is interaction with tRNA; it reads RY.

The protein belongs to the MnmA/TRMU family.

The protein resides in the cytoplasm. It carries out the reaction S-sulfanyl-L-cysteinyl-[protein] + uridine(34) in tRNA + AH2 + ATP = 2-thiouridine(34) in tRNA + L-cysteinyl-[protein] + A + AMP + diphosphate + H(+). In terms of biological role, catalyzes the 2-thiolation of uridine at the wobble position (U34) of tRNA, leading to the formation of s(2)U34. This is tRNA-specific 2-thiouridylase MnmA from Helicobacter pylori (strain ATCC 700392 / 26695) (Campylobacter pylori).